We begin with the raw amino-acid sequence, 79 residues long: Small ribosomal subunit protein bS21 (79 aa).

Positions 59-79 are disordered; that stretch reads RKKMQREGLLPMKPKPVVGVR.

It belongs to the bacterial ribosomal protein bS21 family.

This is Small ribosomal subunit protein bS21 from Methylocella silvestris (strain DSM 15510 / CIP 108128 / LMG 27833 / NCIMB 13906 / BL2).